A 388-amino-acid polypeptide reads, in one-letter code: Probable nitrate transporter NarT (388 aa).

Transmembrane regions (helical) follow at residues 14 to 34 (TLSL…MPMI), 45 to 65 (ISIV…PFGY), 69 to 89 (IIGA…PIFL), 98 to 118 (MLML…VGVT), 139 to 159 (GNLG…AIGW), 161 to 181 (STVR…FFLG), 206 to 226 (YYLS…GIFL), 242 to 262 (GIRA…GGII), 276 to 296 (FLFM…ILFT), 297 to 317 (VGCL…FKLV), 330 to 350 (GIVS…ITYV), and 359 to 379 (LAFI…WHLS).

The protein belongs to the major facilitator superfamily. Nitrate/nitrite porter (TC 2.A.1.8) family.

The protein resides in the cell membrane. Functionally, probably required for nitrate uptake under anoxic conditions. Also possibly involved in excretion of nitrite produced by the dissimilatory reduction of nitrate. The chain is Probable nitrate transporter NarT (narT) from Staphylococcus carnosus (strain TM300).